Here is a 459-residue protein sequence, read N- to C-terminus: Bifunctional protein GlmU (459 aa).

Positions 1 to 230 (MSNRFAVILA…FDETLGVNDR (230 aa)) are pyrophosphorylase. UDP-N-acetyl-alpha-D-glucosamine is bound by residues 9-12 (LAAG), Lys-23, Gln-73, and 78-79 (GT). Asp-103 is a binding site for Mg(2+). 4 residues coordinate UDP-N-acetyl-alpha-D-glucosamine: Gly-140, Glu-155, Asn-170, and Asn-228. Asn-228 is a Mg(2+) binding site. Residues 231 to 251 (VALSQAEIIMKNRINRKNMVN) form a linker region. The N-acetyltransferase stretch occupies residues 252–459 (GVTIIDPSNT…VDQLLNKKKS (208 aa)). Residues Arg-333 and Lys-351 each contribute to the UDP-N-acetyl-alpha-D-glucosamine site. Residue His-363 is the Proton acceptor of the active site. UDP-N-acetyl-alpha-D-glucosamine contacts are provided by Tyr-366 and Asn-377. Residues 386 to 387 (NY), Ala-423, and Arg-440 each bind acetyl-CoA.

It in the N-terminal section; belongs to the N-acetylglucosamine-1-phosphate uridyltransferase family. The protein in the C-terminal section; belongs to the transferase hexapeptide repeat family. In terms of assembly, homotrimer. The cofactor is Mg(2+).

The protein localises to the cytoplasm. It catalyses the reaction alpha-D-glucosamine 1-phosphate + acetyl-CoA = N-acetyl-alpha-D-glucosamine 1-phosphate + CoA + H(+). The catalysed reaction is N-acetyl-alpha-D-glucosamine 1-phosphate + UTP + H(+) = UDP-N-acetyl-alpha-D-glucosamine + diphosphate. Its pathway is nucleotide-sugar biosynthesis; UDP-N-acetyl-alpha-D-glucosamine biosynthesis; N-acetyl-alpha-D-glucosamine 1-phosphate from alpha-D-glucosamine 6-phosphate (route II): step 2/2. It functions in the pathway nucleotide-sugar biosynthesis; UDP-N-acetyl-alpha-D-glucosamine biosynthesis; UDP-N-acetyl-alpha-D-glucosamine from N-acetyl-alpha-D-glucosamine 1-phosphate: step 1/1. The protein operates within bacterial outer membrane biogenesis; LPS lipid A biosynthesis. In terms of biological role, catalyzes the last two sequential reactions in the de novo biosynthetic pathway for UDP-N-acetylglucosamine (UDP-GlcNAc). The C-terminal domain catalyzes the transfer of acetyl group from acetyl coenzyme A to glucosamine-1-phosphate (GlcN-1-P) to produce N-acetylglucosamine-1-phosphate (GlcNAc-1-P), which is converted into UDP-GlcNAc by the transfer of uridine 5-monophosphate (from uridine 5-triphosphate), a reaction catalyzed by the N-terminal domain. The polypeptide is Bifunctional protein GlmU (Bacillus anthracis (strain A0248)).